The following is a 527-amino-acid chain: Baeyer-Villiger monooxygenase (527 aa).

Residues Ser36, Glu56, 64-67, Asp76, Tyr82, and Ile125 each bind FAD; that span reads TWRV. NADP(+) is bound at residue 74 to 76; the sequence is ACD. NADP(+) contacts are provided by residues 199–205, 222–223, and 308–309; these read TGASAIQ, RT, and KR. Residue Met415 participates in FAD binding.

Belongs to the FAD-binding monooxygenase family. It depends on FAD as a cofactor.

Catalyzes a Baeyer-Villiger oxidation reaction, i.e. the insertion of an oxygen atom into a carbon-carbon bond adjacent to a carbonyl, which converts ketones to esters or lactones using NADPH and/or NADH as an electron donor. Thus, can convert bicyclo[3.2.0]hept-2-en-6-one into the oxidative lactone products 2-oxabicyclo[3.3.0]oct-6-en-3-one and 3-oxabicyclo[3.3.0]oct-6-en-2-one. Is also able to catalyze the sulfoxidation of methyl phenyl sulfide (thioanisole). The sequence is that of Baeyer-Villiger monooxygenase from Pseudomonas aeruginosa (strain ATCC 15692 / DSM 22644 / CIP 104116 / JCM 14847 / LMG 12228 / 1C / PRS 101 / PAO1).